The primary structure comprises 757 residues: MENQSNDISKCPFHNGSMDNQAASGTKNNDWWPKQLKVNILRQNSSLSNPLSKDFDYAEAFKTLDLEAVKKDLHVLMTDSQDWWPADFGHYGGLFIRMAWHSAGTYRVHDGRGGAGAGQQRFAPLNSWPDNVSLDKARRLLWPIKQKYGQKISWADLMILTGNVALESMGFKTFGFAGGRADVWEPDESVYWGSETTWLGGDERYNNGSDGVPKDHGVVSADDDADGKVHSRNLEKPLAAVQMGLIYVNPEGPDGNPDPILAAKDIRDTFGRMAMNDEETVALIAGGHTFGKTHGAASSDHVDKEPEAAGLELQGFGWKNSFGSGKGADAITSGLEVTWTKTPTQWSNNFFENLFAFEWELSKSPAGAHQWVAKNAEAIIPDAFDSTKKHLPTMLTTDLSLRLDPEYEKISRRFLENPDQFADAFSRAWFKLTHRDMGPRARYLGPDVPQEVLLWQDPIPEVNHKLIDENDIKQLKEKILNSGLSISQLVAAAWASASTFRGSDKRGGANGARVRLAPQKDWEVNNPAKLAQVLSKLETIQTEFNASQNDGKKVSLADLIVLAGSAGVEKAAKDAGSSVTVSFNPGRMDASAEETDVESFGYLEPKADGFRNYRKTKSAVSTEELLIDKANLLTLTAPELTVLLGGLRVLDINADGSKNGVFTHRPGQLTNDFFVNLLDMNTQWQAVSNDKELYAGNDRSTGQPKWIATRADLVFGSNSELRAVAEVYASTDANEKFVNDFIKAWTKVMNLDRFDLA.

The interval 1 to 28 is disordered; that stretch reads MENQSNDISKCPFHNGSMDNQAASGTKN. The segment covering 17 to 28 has biased composition (polar residues); sequence SMDNQAASGTKN. Residues 100–247 constitute a cross-link (tryptophyl-tyrosyl-methioninium (Trp-Tyr) (with M-273)); the sequence is WHSAGTYRVH…LAAVQMGLIY (148 aa). Residue His101 is the Proton acceptor of the active site. The tryptophyl-tyrosyl-methioninium (Tyr-Met) (with W-100) cross-link spans 247–273; that stretch reads YVNPEGPDGNPDPILAAKDIRDTFGRM. Residue His288 participates in heme b binding.

Belongs to the peroxidase family. Peroxidase/catalase subfamily. As to quaternary structure, homodimer or homotetramer. Heme b is required as a cofactor. In terms of processing, formation of the three residue Trp-Tyr-Met cross-link is important for the catalase, but not the peroxidase activity of the enzyme.

It catalyses the reaction H2O2 + AH2 = A + 2 H2O. The enzyme catalyses 2 H2O2 = O2 + 2 H2O. Bifunctional enzyme with both catalase and broad-spectrum peroxidase activity. The sequence is that of Catalase-peroxidase from Flavobacterium johnsoniae (strain ATCC 17061 / DSM 2064 / JCM 8514 / BCRC 14874 / CCUG 350202 / NBRC 14942 / NCIMB 11054 / UW101) (Cytophaga johnsonae).